Consider the following 245-residue polypeptide: uncharacterized protein (245 aa).

This is an uncharacterized protein from Acanthamoeba polyphaga (Amoeba).